The chain runs to 352 residues: Molybdenum import ATP-binding protein ModC (352 aa).

Positions 1 to 229 (MLELNFSQTL…SVMNPWLPKE (229 aa)) constitute an ABC transporter domain. An ATP-binding site is contributed by 31 to 38 (GVSGAGKT). The Mop domain occupies 289–352 (QTSIRNVLRA…AQIKSVSITA (64 aa)).

The protein belongs to the ABC transporter superfamily. Molybdate importer (TC 3.A.1.8) family. The complex is composed of two ATP-binding proteins (ModC), two transmembrane proteins (ModB) and a solute-binding protein (ModA).

It localises to the cell inner membrane. It carries out the reaction molybdate(out) + ATP + H2O = molybdate(in) + ADP + phosphate + H(+). Functionally, part of the ABC transporter complex ModABC involved in molybdenum import. Responsible for energy coupling to the transport system. The polypeptide is Molybdenum import ATP-binding protein ModC (Escherichia coli (strain K12)).